We begin with the raw amino-acid sequence, 125 residues long: Small ribosomal subunit protein uS12 (125 aa).

The residue at position 89 (Asp89) is a 3-methylthioaspartic acid. A disordered region spans residues 100–125; it reads GSLDTQGVKDRKQSRSKYGAKRPKAA. Over residues 113-125 the composition is skewed to basic residues; the sequence is SRSKYGAKRPKAA.

The protein belongs to the universal ribosomal protein uS12 family. In terms of assembly, part of the 30S ribosomal subunit. Contacts proteins S8 and S17. May interact with IF1 in the 30S initiation complex.

Functionally, with S4 and S5 plays an important role in translational accuracy. In terms of biological role, interacts with and stabilizes bases of the 16S rRNA that are involved in tRNA selection in the A site and with the mRNA backbone. Located at the interface of the 30S and 50S subunits, it traverses the body of the 30S subunit contacting proteins on the other side and probably holding the rRNA structure together. The combined cluster of proteins S8, S12 and S17 appears to hold together the shoulder and platform of the 30S subunit. The protein is Small ribosomal subunit protein uS12 of Dechloromonas aromatica (strain RCB).